The sequence spans 89 residues: Large ribosomal subunit protein bL27 (89 aa).

This sequence belongs to the bacterial ribosomal protein bL27 family.

The sequence is that of Large ribosomal subunit protein bL27 from Afipia carboxidovorans (strain ATCC 49405 / DSM 1227 / KCTC 32145 / OM5) (Oligotropha carboxidovorans).